Consider the following 92-residue polypeptide: MVRSLKKGPFVANDLFKKIEKLNNKGKKKVLVTWSRSSTIVPVMIGHTIAVHNGREHIPVFITDKMVGHKLGEFSLTRTYRGHAKTDKKSKR.

This sequence belongs to the universal ribosomal protein uS19 family.

The protein localises to the plastid. The protein resides in the chloroplast. Functionally, protein S19 forms a complex with S13 that binds strongly to the 16S ribosomal RNA. This is Small ribosomal subunit protein uS19c from Oedogonium cardiacum (Filamentous green alga).